The following is a 490-amino-acid chain: Probable glycine dehydrogenase (decarboxylating) subunit 2 (490 aa).

At K273 the chain carries N6-(pyridoxal phosphate)lysine.

Belongs to the GcvP family. C-terminal subunit subfamily. In terms of assembly, the glycine cleavage system is composed of four proteins: P, T, L and H. In this organism, the P 'protein' is a heterodimer of two subunits. Pyridoxal 5'-phosphate is required as a cofactor.

The catalysed reaction is N(6)-[(R)-lipoyl]-L-lysyl-[glycine-cleavage complex H protein] + glycine + H(+) = N(6)-[(R)-S(8)-aminomethyldihydrolipoyl]-L-lysyl-[glycine-cleavage complex H protein] + CO2. Its function is as follows. The glycine cleavage system catalyzes the degradation of glycine. The P protein binds the alpha-amino group of glycine through its pyridoxal phosphate cofactor; CO(2) is released and the remaining methylamine moiety is then transferred to the lipoamide cofactor of the H protein. The protein is Probable glycine dehydrogenase (decarboxylating) subunit 2 of Staphylococcus aureus (strain bovine RF122 / ET3-1).